A 200-amino-acid chain; its full sequence is 3-isopropylmalate dehydratase small subunit (200 aa).

This sequence belongs to the LeuD family. LeuD type 1 subfamily. Heterodimer of LeuC and LeuD.

It catalyses the reaction (2R,3S)-3-isopropylmalate = (2S)-2-isopropylmalate. Its pathway is amino-acid biosynthesis; L-leucine biosynthesis; L-leucine from 3-methyl-2-oxobutanoate: step 2/4. Functionally, catalyzes the isomerization between 2-isopropylmalate and 3-isopropylmalate, via the formation of 2-isopropylmaleate. The chain is 3-isopropylmalate dehydratase small subunit from Vibrio atlanticus (strain LGP32) (Vibrio splendidus (strain Mel32)).